The primary structure comprises 574 residues: 4-oxocyclohexanecarboxylate 2-dehydrogenase (574 aa).

The protein belongs to the FAD-dependent oxidoreductase 2 family. Monomer. Homodimer. FAD is required as a cofactor.

The catalysed reaction is 4-oxocyclohexane-1-carboxylate + O2 = 4-oxocyclohex-2-ene-1-carboxylate + H2O2. Inhibited by 5,5'-dithio-bis(2- nitrobenzoate) and N-bromosuccinimide, but not by thiol and chelating reagents. Functionally, desaturase involved in a cyclohexanecarboxylate (CHCA) degradation pathway. Catalyzes the conversion of 4-oxocyclohexanecarboxylate (4-oxoCHCA) to 4-oxocyclohexenecarboxylate. Is highly specific for 4-oxocyclohexanecarboxylic acid and shows only slight activity with 4-oxo-2-methylcyclohex-2-enecarboxylic acid. The sequence is that of 4-oxocyclohexanecarboxylate 2-dehydrogenase from Sinomonas cyclohexanicum (Corynebacterium cyclohexanicum).